The chain runs to 371 residues: MAAPALRLCHIAFHVPAGQPLARNLQRLFGFQPLASREVDGWRQLALRSGDAVFLVNEGAGSGEPLYGLDPRHAVPSATNLCFDVADAGAATRELAALGCSVPVPPVRVRDAQGAATYAVVSSPAGILSLTLLERAGYRGPFLPGFRPVSSAPGPGWVSRVDHLTLACTPGSSPTLLRWFHDCLGFCHLPLSPGEDPELGLEMTAGFGLGGLRLTALQAQPGSIVPTLVLAESLPGATTRQDQVEQFLARHKGPGLQHVGLYTPNIVEATEGVATAGGQFLAPPGAYYQQPGKERQIRAAGHEPHLLARQGILLDGDKGKFLLQVFTKSLFTEDTFFLELIQRQGATGFGQGNIRALWQSVQEQSARSQEA.

2 VOC domains span residues 7 to 135 and 160 to 328; these read RLCH…LLER and RVDH…VFTK. The Fe cation site is built by histidine 163, histidine 258, and glutamate 339.

Belongs to the 4HPPD family. Requires Fe cation as cofactor.

The protein localises to the mitochondrion. It catalyses the reaction 3-(4-hydroxyphenyl)pyruvate + O2 = (S)-4-hydroxymandelate + CO2. Its function is as follows. Iron-dependent dioxygenase that catalyzes the conversion of 4-hydroxyphenylpyruvate (4-HPPA) to 4-hydroxymandelate (4-HMA) in the mitochondria, one of the steps in the biosynthesis of coenzyme Q10 from tyrosine. The chain is 4-hydroxyphenylpyruvate dioxygenase-like protein from Homo sapiens (Human).